The primary structure comprises 632 residues: Phosphomethylpyrimidine synthase (632 aa).

Positions 1–13 are enriched in polar residues; the sequence is MNIRSNPDTTLPA. The disordered stretch occupies residues 1–26; that stretch reads MNIRSNPDTTLPAVTTGPLPSSRKIF. Residues N221, M250, Y279, H315, 335-337, 376-379, and E415 contribute to the substrate site; these read SRG and DGLR. Position 419 (H419) interacts with Zn(2+). Y442 lines the substrate pocket. Zn(2+) is bound at residue H483. 3 residues coordinate [4Fe-4S] cluster: C563, C566, and C571.

Belongs to the ThiC family. As to quaternary structure, homodimer. [4Fe-4S] cluster is required as a cofactor.

The catalysed reaction is 5-amino-1-(5-phospho-beta-D-ribosyl)imidazole + S-adenosyl-L-methionine = 4-amino-2-methyl-5-(phosphooxymethyl)pyrimidine + CO + 5'-deoxyadenosine + formate + L-methionine + 3 H(+). It participates in cofactor biosynthesis; thiamine diphosphate biosynthesis. Its function is as follows. Catalyzes the synthesis of the hydroxymethylpyrimidine phosphate (HMP-P) moiety of thiamine from aminoimidazole ribotide (AIR) in a radical S-adenosyl-L-methionine (SAM)-dependent reaction. The polypeptide is Phosphomethylpyrimidine synthase (Afipia carboxidovorans (strain ATCC 49405 / DSM 1227 / KCTC 32145 / OM5) (Oligotropha carboxidovorans)).